We begin with the raw amino-acid sequence, 409 residues long: Secreted LysM effector Blys2 (409 aa).

The signal sequence occupies residues 1–20; that stretch reads MTRFTTTLVAALAGANLAAA. The LysM 1 domain maps to 24–71; that stretch reads YKWRAHAGDTCDSLSSDWSVQVSDFIKWNPSVGANCSNGVTAGQEYCV. N-linked (GlcNAc...) asparagine glycosylation occurs at Asn-58. A disordered region spans residues 74-111; the sequence is NGAGSKPTTPPTGSPTTLTTAVTTASSTPTQPTDGAPS. Over residues 87 to 106 the composition is skewed to low complexity; it reads SPTTLTTAVTTASSTPTQPT. 4 LysM domains span residues 129-176, 206-253, 283-330, and 357-405; these read AWYK…YVCV, KWYK…FVCV, KFYK…YYCI, and KYYK…YICV.

The protein belongs to the secreted LysM effector family.

The protein resides in the secreted. The protein localises to the cell wall. Its function is as follows. Secreted effector that enables the plant pathogenic fungus to manipulate host defenses for successful infection. Required for the full virulence to infect insect hosts. In contrast to Blys5, Blys2 is not able to protect fungal hyphae against the hydrolytic activity of chitinase but plays an important role in evasion of insect immunities. Binds chitin. Coats and protects the cell walls of insect pathogens from host cell recognition. The sequence is that of Secreted LysM effector Blys2 from Beauveria bassiana (strain ARSEF 2860) (White muscardine disease fungus).